The primary structure comprises 377 residues: Succinyl-diaminopimelate desuccinylase (377 aa).

His66 provides a ligand contact to Zn(2+). Asp68 is a catalytic residue. Asp99 provides a ligand contact to Zn(2+). Glu133 serves as the catalytic Proton acceptor. Positions 134, 163, and 349 each coordinate Zn(2+).

Belongs to the peptidase M20A family. DapE subfamily. In terms of assembly, homodimer. It depends on Zn(2+) as a cofactor. Requires Co(2+) as cofactor.

It catalyses the reaction N-succinyl-(2S,6S)-2,6-diaminopimelate + H2O = (2S,6S)-2,6-diaminopimelate + succinate. It functions in the pathway amino-acid biosynthesis; L-lysine biosynthesis via DAP pathway; LL-2,6-diaminopimelate from (S)-tetrahydrodipicolinate (succinylase route): step 3/3. Functionally, catalyzes the hydrolysis of N-succinyl-L,L-diaminopimelic acid (SDAP), forming succinate and LL-2,6-diaminopimelate (DAP), an intermediate involved in the bacterial biosynthesis of lysine and meso-diaminopimelic acid, an essential component of bacterial cell walls. This Legionella pneumophila (strain Corby) protein is Succinyl-diaminopimelate desuccinylase.